A 133-amino-acid polypeptide reads, in one-letter code: Small ribosomal subunit protein uS11 (133 aa).

This sequence belongs to the universal ribosomal protein uS11 family. Part of the 30S ribosomal subunit. Interacts with proteins S7 and S18. Binds to IF-3.

Functionally, located on the platform of the 30S subunit, it bridges several disparate RNA helices of the 16S rRNA. Forms part of the Shine-Dalgarno cleft in the 70S ribosome. In Bordetella avium (strain 197N), this protein is Small ribosomal subunit protein uS11.